The following is a 718-amino-acid chain: Catalase-peroxidase 1 (718 aa).

The tryptophyl-tyrosyl-methioninium (Trp-Tyr) (with M-247) cross-link spans 93–221 (WHSAGTYRIA…LAAVMMGLIY (129 aa)). The Proton acceptor role is filled by histidine 94. The segment at residues 221-247 (YVNPEGVDGNPDPLKTAQDMRVTFARM) is a cross-link (tryptophyl-tyrosyl-methioninium (Tyr-Met) (with W-93)). Histidine 262 provides a ligand contact to heme b.

Belongs to the peroxidase family. Peroxidase/catalase subfamily. Homodimer or homotetramer. Requires heme b as cofactor. In terms of processing, formation of the three residue Trp-Tyr-Met cross-link is important for the catalase, but not the peroxidase activity of the enzyme.

It carries out the reaction H2O2 + AH2 = A + 2 H2O. It catalyses the reaction 2 H2O2 = O2 + 2 H2O. In terms of biological role, bifunctional enzyme with both catalase and broad-spectrum peroxidase activity. The polypeptide is Catalase-peroxidase 1 (Shewanella amazonensis (strain ATCC BAA-1098 / SB2B)).